Reading from the N-terminus, the 402-residue chain is 4-hydroxy-3-methylbut-2-en-1-yl diphosphate synthase (ferredoxin) (402 aa).

[4Fe-4S] cluster-binding residues include cysteine 311, cysteine 314, cysteine 345, and glutamate 352.

The protein belongs to the IspG family. [4Fe-4S] cluster is required as a cofactor.

It catalyses the reaction (2E)-4-hydroxy-3-methylbut-2-enyl diphosphate + 2 oxidized [2Fe-2S]-[ferredoxin] + H2O = 2-C-methyl-D-erythritol 2,4-cyclic diphosphate + 2 reduced [2Fe-2S]-[ferredoxin] + H(+). The protein operates within isoprenoid biosynthesis; isopentenyl diphosphate biosynthesis via DXP pathway; isopentenyl diphosphate from 1-deoxy-D-xylulose 5-phosphate: step 5/6. Functionally, converts 2C-methyl-D-erythritol 2,4-cyclodiphosphate (ME-2,4cPP) into 1-hydroxy-2-methyl-2-(E)-butenyl 4-diphosphate, using ferredoxin I (PetF) as the reducing agent. This is 4-hydroxy-3-methylbut-2-en-1-yl diphosphate synthase (ferredoxin) from Thermosynechococcus vestitus (strain NIES-2133 / IAM M-273 / BP-1).